Reading from the N-terminus, the 249-residue chain is T-cell immunoreceptor with Ig and ITIM domains (249 aa).

The signal sequence occupies residues 1-28 (MHGWLLLVWVQGLIQAAFLATAIGATAG). The Ig-like V-type domain occupies 29 to 127 (TIDTKRNISA…GGIYKGRIFL (99 aa)). At 29-148 (TIDTKRNISA…LAQFQTAPLG (120 aa)) the chain is on the extracellular side. The interval 35 to 45 (NISAEEGGSVI) is homodimerization. Cys48 and Cys111 are disulfide-bonded. Asn104 carries an N-linked (GlcNAc...) asparagine glycan. Residues 149-169 (GTMAAVLGLICLMVTGVTVLA) traverse the membrane as a helical segment. The Cytoplasmic segment spans residues 170-249 (RKDKSIRMHS…ESFIAVSKTG (80 aa)). Residues 182-222 (SGLGRTEAEPQEWNLRSLSSPGSPVQTQTAPAGPCGEQAED) form a disordered region. Residues 195–211 (NLRSLSSPGSPVQTQTA) show a composition bias toward polar residues. The ITIM motif signature appears at 234 to 239 (LSYRSL).

As to quaternary structure, homodimer in cis; binds with high affinity to PVR, forming a heterotetrameric assembly of two TIGIT and two PVR molecules. Binds with lower affinity to NECTIN2 and NECTIN3. Interacts with GRB2. Interacts with NECTIN4.

It localises to the cell membrane. In terms of biological role, inhibitory receptor that plays a role in the modulation of immune responses. Suppresses T-cell activation by promoting the generation of mature immunoregulatory dendritic cells. Upon binding to its ligands PVR/CD155 or NECTIN2/CD112, which are expressed on antigen-presenting cells, sends inhibitory signals to the T-cell or NK cell. Mechanistically, interaction with ligand leads to phosphorylation of the cytoplasmic tail by Src family tyrosine kinases such as FYN or LCK, allowing subsequent binding to adapter GRB2 and SHIP1/INPP5D. In turn, inhibits PI3K and MAPK signaling cascades. In addition, associates with beta-arrestin-2/ARRB2 to recruit SHIP1/INPP5D that suppresses autoubiquitination of TRAF6 and subsequently inhibits NF-kappa-B signaling pathway. Also acts as a receptor for NECTIN4 to inhibit NK cell cytotoxicity. This chain is T-cell immunoreceptor with Ig and ITIM domains, found in Mus musculus (Mouse).